A 415-amino-acid chain; its full sequence is Serine hydroxymethyltransferase 1 (415 aa).

Residues L122 and 126–128 (GHL) each bind (6S)-5,6,7,8-tetrahydrofolate. The residue at position 230 (K230) is an N6-(pyridoxal phosphate)lysine.

This sequence belongs to the SHMT family. In terms of assembly, homodimer. Pyridoxal 5'-phosphate serves as cofactor.

It is found in the cytoplasm. The enzyme catalyses (6R)-5,10-methylene-5,6,7,8-tetrahydrofolate + glycine + H2O = (6S)-5,6,7,8-tetrahydrofolate + L-serine. Its pathway is one-carbon metabolism; tetrahydrofolate interconversion. It functions in the pathway amino-acid biosynthesis; glycine biosynthesis; glycine from L-serine: step 1/1. Its function is as follows. Catalyzes the reversible interconversion of serine and glycine with tetrahydrofolate (THF) serving as the one-carbon carrier. This reaction serves as the major source of one-carbon groups required for the biosynthesis of purines, thymidylate, methionine, and other important biomolecules. Also exhibits THF-independent aldolase activity toward beta-hydroxyamino acids, producing glycine and aldehydes, via a retro-aldol mechanism. This chain is Serine hydroxymethyltransferase 1, found in Burkholderia thailandensis (strain ATCC 700388 / DSM 13276 / CCUG 48851 / CIP 106301 / E264).